The following is an 807-amino-acid chain: SWI/SNF complex subunit SWI3C (807 aa).

Residues 1–74 are disordered; sequence MPASEDRRGK…DPGLGIGEVV (74 aa). Residues 28 to 54 are compositionally biased toward acidic residues; the sequence is EEEDMEEEDEENNNNNNEEMDDVENAD. Positions 176 to 274 constitute an SWIRM domain; sequence HVLPMHSDWF…YCATAQSHPG (99 aa). Residues 340 to 394 form a ZZ-type; degenerate zinc finger; the sequence is LCDSHCNHCSRPLPTVYFQSQKKGDILLCCDCFHHGRFVVGHSCLDFVRVDPMKF. Zn(2+) contacts are provided by cysteine 345, cysteine 348, cysteine 368, and cysteine 371. The SANT domain occupies 398-449; sequence QDGDNWTDQETLLLLEAVELYNENWVQIADHVGSKSKAQCILHFLRLPVEDG. Composition is skewed to polar residues over residues 458–467 and 552–569; these read GVTNTENPTN and ENQQ…NGAE. Disordered stretches follow at residues 458 to 487 and 549 to 571; these read GVTN…SEQG and LDGE…AEAQ. Residues 598–656 are a coiled coil; sequence ADHEEREIQRLSANIVNHQLKRMELKLKQFAEIETLLMKECEQVEKTRQRFSAERARML. Low complexity-rich tracts occupy residues 692–703 and 726–739; these read QHQQQQASATSQ and QQQQ…QQQQ. Disordered stretches follow at residues 692–713, 721–740, and 781–807; these read QHQQ…FSNN, HFMA…QQQA, and SINQ…LGLN. Over residues 798-807 the composition is skewed to gly residues; sequence SGSGSGLGLN.

Heterodimer. Interacts with SWI3A, SWI3B and BRM, but not with BSH. Interacts with MORC6 and SUVH9. As to expression, expressed in roots, stems, leaves, flowers and siliques.

Its subcellular location is the nucleus. Its function is as follows. Component of a multiprotein complex equivalent of the SWI/SNF complex, an ATP-dependent chromatin-remodeling complex, which is required for the positive and negative regulation of gene expression of a large number of genes. It changes chromatin structure by altering DNA-histone contacts within a nucleosome, leading eventually to a change in nucleosome position, thus facilitating or repressing binding of gene-specific transcription factors. This is SWI/SNF complex subunit SWI3C (SWI3C) from Arabidopsis thaliana (Mouse-ear cress).